Here is a 228-residue protein sequence, read N- to C-terminus: Max-interacting protein 1 (228 aa).

2 disordered regions span residues 29–76 (GYAS…NELE) and 161–228 (IGST…SFTS). Positions 43 to 56 (QHSKPPRRLSRAQK) are enriched in basic residues. The span at 57 to 70 (HSSGSSNTSTANRS) shows a compositional bias: polar residues. Positions 67–119 (ANRSTHNELEKNRRAHLRLCLERLKVLIPLGPDCTRHTTLGLLNKAKAHIKKL) constitute a bHLH domain. Positions 173–183 (EREEIEVDVES) are enriched in acidic residues. Positions 216-228 (GYSSASVKLSFTS) are enriched in polar residues.

As to quaternary structure, interacts with SMC3. Efficient DNA binding requires dimerization with another bHLH protein. Binds DNA as a heterodimer with MAX. Interacts with RNF17. In terms of tissue distribution, high levels found in the brain, heart and lung while lower levels are seen in the liver, kidney and skeletal muscle.

It is found in the nucleus. Functionally, transcriptional repressor. MXI1 binds with MAX to form a sequence-specific DNA-binding protein complex which recognizes the core sequence 5'-CAC[GA]TG-3'. MXI1 thus antagonizes MYC transcriptional activity by competing for MAX. In Homo sapiens (Human), this protein is Max-interacting protein 1 (MXI1).